The sequence spans 463 residues: Ammonium transporter 1 (463 aa).

Over 1-39 the chain is Extracellular; the sequence is MVAGEIIKGVAAEITNGSSSSVVQKYLDCANQVAPDPGN. A helical membrane pass occupies residues 40-60; the sequence is TTWVLLSTILVLGMMPALAFF. The Cytoplasmic portion of the chain corresponds to 61-76; that stretch reads EAGLLRSKNTLSIITQ. A helical membrane pass occupies residues 77-97; the sequence is IMSGIVVLTVMWQAFGYSLTF. At 98 to 127 the chain is on the extracellular side; the sequence is GPDQKGIIGNLDHAFLINVSYDDCSPNAPN. The chain crosses the membrane as a helical span at residues 128–148; sequence IPAAAYAFFMMMFANITPLLM. Residues 149–160 are Cytoplasmic-facing; the sequence is TGAFAERVKFKA. A helical transmembrane segment spans residues 161–181; it reads FIALTVAWEIIVFYPVAHWIW. The Extracellular segment spans residues 182-194; it reads GGGWLHKYFGVLD. The chain crosses the membrane as a helical span at residues 195–215; it reads FAGGIVIHTSAGVSALVIALY. The Cytoplasmic portion of the chain corresponds to 216 to 233; it reads VGRRKDFEKYGGEFPPSN. A helical membrane pass occupies residues 234 to 254; sequence LPLATIGAALLWMGWFGFNAG. The Extracellular portion of the chain corresponds to 255 to 265; sequence SALAAGNIATS. Residues 266–286 traverse the membrane as a helical segment; it reads AVASTQIGGSFSAIVWIILSA. Residues 287-293 lie on the Cytoplasmic side of the membrane; that stretch reads AKGKPNT. Residues 294-314 form a helical membrane-spanning segment; that stretch reads VSVINGVIAGLAGITPASGYI. Residues 315-316 are Extracellular-facing; sequence NS. The chain crosses the membrane as a helical span at residues 317-337; sequence QYSIGLGICLGLASYYSVVLL. At 338-351 the chain is on the cytoplasmic side; it reads KHKLHIDDALDVSS. Residues 352–372 traverse the membrane as a helical segment; sequence VHGLTGIIGSLAIGFCAELSV. Residues 373–392 lie on the Extracellular side of the membrane; sequence NPNGANGAFYGNPKLIGTQL. Residues 393–413 traverse the membrane as a helical segment; that stretch reads LGVVSVAVWAAAWTWVLLKII. The Cytoplasmic segment spans residues 414–463; it reads DATIGVKIDESEEELGLDLVEHGEFAYHNISLQGNENHYSSVINSHDFFK.

The protein belongs to the ammonia transporter channel (TC 1.A.11.2) family.

The protein resides in the cell membrane. The protein localises to the endosome membrane. It is found in the lysosome membrane. It localises to the cytoplasmic vesicle. Its subcellular location is the phagosome membrane. In terms of biological role, ammonium transporter that mediates the excretion of ammonium. Controls ammonium homeostasis during growth and development. Ammonium has been shown to function as a morphogen at multiple steps during the development. The polypeptide is Ammonium transporter 1 (amtA) (Dictyostelium discoideum (Social amoeba)).